The primary structure comprises 539 residues: Acrosin-binding protein (539 aa).

The signal sequence occupies residues 1–25 (MRQLAAGSLLSLLKVLLLPLAPAPA). The interval 26-106 (QDANSASTPG…ASWFESFCQF (81 aa)) is pro-ACR binding. The propeptide at 26–269 (QDANSASTPG…NPFSFTPRVR (244 aa)) is removed in active form. Residues 186-259 (LGGQEQGQEH…PKFQSEFVSS (74 aa)) form a disordered region. Over residues 192-211 (GQEHKQEHKQEQGQEHKQDE) the composition is skewed to basic and acidic residues. Over residues 212–238 (GQEQEEQEEEQEEEGKQEEGQGTEESL) the composition is skewed to acidic residues. Residues 315-423 (LPHVDALLVL…TQIGTLKSGR (109 aa)) form a pro-ACR binding region.

Binds specifically to the 55- and 53-kDa proacrosins and the 49-kDa acrosin intermediate, but is not capable of binding 43-kDa acrosin intermediate and 32-kDa mature acrosin. Post-translationally, the N-terminus is blocked. Synthesized as a 60-kDa precursor, the 35-kDa mature form is post-translationally produced by the removal of the N-terminal half of the precursor during sperm maturation in the testis and/or epididymis. In terms of processing, phosphorylated on Tyr residues in capacitated sperm. Specifically expressed in testis.

The protein resides in the secreted. Its subcellular location is the cytoplasmic vesicle. It is found in the secretory vesicle. The protein localises to the acrosome. Functionally, acrosomal protein that maintains proacrosin (pro-ACR) as an enzymatically inactive zymogen in the acrosome. Involved also in the acrosome formation. This chain is Acrosin-binding protein, found in Sus scrofa (Pig).